A 159-amino-acid chain; its full sequence is Protein phosphatase 1 regulatory subunit 17 (159 aa).

Disordered regions lie at residues 1–79 (MSTE…HIPP) and 98–127 (RIPKAKSGPALHNSDMEQKRPRRKDTPALH). Composition is skewed to basic and acidic residues over residues 62–73 (SDQKKPRRKDTP) and 111–124 (SDMEQKRPRRKDTP). Phosphothreonine; by PKG/PRKG1 occurs at positions 72 and 123.

In terms of processing, substrate for cGMP-dependent protein kinase. Phosphorylation of Thr-72 and Thr-123 is required for its phosphatase activity. Phosphorylated by PRKG1 isoform alpha. As to expression, expressed in Purkinje cells of the cerebellum, hippocampus, pons, medulla and eye.

Functionally, inhibits phosphatase activities of protein phosphatase 1 (PP1) and protein phosphatase 2A (PP2A) complexes. This chain is Protein phosphatase 1 regulatory subunit 17 (Ppp1r17), found in Mus musculus (Mouse).